The sequence spans 506 residues: Maturase K (506 aa).

The protein belongs to the intron maturase 2 family. MatK subfamily.

It localises to the plastid. The protein resides in the chloroplast. Its function is as follows. Usually encoded in the trnK tRNA gene intron. Probably assists in splicing its own and other chloroplast group II introns. The chain is Maturase K from Rhododendron tomentosum (Marsh Labrador tea).